The sequence spans 149 residues: Large ribosomal subunit protein uL24 (149 aa).

The protein belongs to the universal ribosomal protein uL24 family. Part of the 50S ribosomal subunit.

One of two assembly initiator proteins, it binds directly to the 5'-end of the 23S rRNA, where it nucleates assembly of the 50S subunit. Functionally, one of the proteins that surrounds the polypeptide exit tunnel on the outside of the subunit. In Nostoc sp. (strain PCC 7120 / SAG 25.82 / UTEX 2576), this protein is Large ribosomal subunit protein uL24.